The sequence spans 325 residues: Probable flavonol synthase 5 (325 aa).

Positions 1 to 21 (MEEERDHNASESSLPSLSKQL) are disordered. Residues 10–21 (SESSLPSLSKQL) are compositionally biased toward polar residues. The Fe2OG dioxygenase domain occupies 180–280 (TAEYVLRVNF…RISWPVFVAP (101 aa)). 188–190 (NFY) is a binding site for 2-oxoglutarate. Residues His205, Asp207, and His261 each contribute to the Fe cation site. A 2-oxoglutarate-binding site is contributed by 271 to 273 (RIS).

The protein belongs to the iron/ascorbate-dependent oxidoreductase family. It depends on Fe(2+) as a cofactor. Expressed in young seedlings.

The enzyme catalyses a (2R,3R)-dihydroflavonol + 2-oxoglutarate + O2 = a flavonol + succinate + CO2 + H2O. It participates in secondary metabolite biosynthesis; flavonoid biosynthesis. This Arabidopsis thaliana (Mouse-ear cress) protein is Probable flavonol synthase 5 (FLS5).